Here is a 93-residue protein sequence, read N- to C-terminus: Small ribosomal subunit protein uS17 (93 aa).

This sequence belongs to the universal ribosomal protein uS17 family. Part of the 30S ribosomal subunit.

One of the primary rRNA binding proteins, it binds specifically to the 5'-end of 16S ribosomal RNA. In Corynebacterium aurimucosum (strain ATCC 700975 / DSM 44827 / CIP 107346 / CN-1) (Corynebacterium nigricans), this protein is Small ribosomal subunit protein uS17.